Consider the following 390-residue polypeptide: Lipoyl synthase, mitochondrial (390 aa).

Residues 1–18 (MALYRAPKLQRSLLNRCL) constitute a mitochondrion transit peptide. 7 residues coordinate [4Fe-4S] cluster: C99, C104, C110, C137, C141, C144, and S351. One can recognise a Radical SAM core domain in the interval 120–340 (AEGRSAATAT…KQVAEDLGFL (221 aa)).

Belongs to the radical SAM superfamily. Lipoyl synthase family. Requires [4Fe-4S] cluster as cofactor.

The protein localises to the mitochondrion. It carries out the reaction [[Fe-S] cluster scaffold protein carrying a second [4Fe-4S](2+) cluster] + N(6)-octanoyl-L-lysyl-[protein] + 2 oxidized [2Fe-2S]-[ferredoxin] + 2 S-adenosyl-L-methionine + 4 H(+) = [[Fe-S] cluster scaffold protein] + N(6)-[(R)-dihydrolipoyl]-L-lysyl-[protein] + 4 Fe(3+) + 2 hydrogen sulfide + 2 5'-deoxyadenosine + 2 L-methionine + 2 reduced [2Fe-2S]-[ferredoxin]. The protein operates within protein modification; protein lipoylation via endogenous pathway; protein N(6)-(lipoyl)lysine from octanoyl-[acyl-carrier-protein]: step 2/2. Catalyzes the radical-mediated insertion of two sulfur atoms into the C-6 and C-8 positions of the octanoyl moiety bound to the lipoyl domains of lipoate-dependent enzymes, thereby converting the octanoylated domains into lipoylated derivatives. The polypeptide is Lipoyl synthase, mitochondrial (Coprinopsis cinerea (strain Okayama-7 / 130 / ATCC MYA-4618 / FGSC 9003) (Inky cap fungus)).